Consider the following 191-residue polypeptide: Cathelicidin-related antimicrobial peptide Na_CRAMP (191 aa).

The first 22 residues, 1 to 22 (MEGFFWKTLLVVGALTISGTSS), serve as a signal peptide directing secretion. The propeptide occupies 23–161 (FPHKPLTYEE…DQPKRVKRFK (139 aa)). 2 disulfide bridges follow: cysteine 81–cysteine 92 and cysteine 103–cysteine 120. The tract at residues 126 to 154 (EEEQKQEEGNEEEKEVEKEEKEEDQKDQP) is disordered. Positions 140 to 154 (EVEKEEKEEDQKDQP) are enriched in basic and acidic residues.

Belongs to the cathelicidin family. Expressed by the venom gland.

It is found in the secreted. Its subcellular location is the target cell membrane. Functionally, potent antimicrobial peptide against most of Gram-negative bacteria, some Gram-positive bacteria (Bacillus) and some fungi. Adopts an amphipathic alpha helical conformation, that may allow to partition into the target membrane. No hemolytic and cytotoxic activities have been observed on mammalian cells. The sequence is that of Cathelicidin-related antimicrobial peptide Na_CRAMP from Naja atra (Chinese cobra).